A 488-amino-acid chain; its full sequence is Inosine-5'-monophosphate dehydrogenase (488 aa).

2 CBS domains span residues 95-153 and 157-216; these read VISN…SIKI and MTQE…AKDE. NAD(+) is bound by residues D250 and 300–302; that span reads GIG. K(+) is bound by residues G302 and G304. S305 lines the IMP pocket. Position 307 (C307) interacts with K(+). C307 functions as the Thioimidate intermediate in the catalytic mechanism. IMP-binding positions include 340–342, 363–364, and 387–391; these read DGG, GS, and YRGMG. R403 functions as the Proton acceptor in the catalytic mechanism. IMP is bound at residue E417. Residues 468 to 488 form a disordered region; that stretch reads GLAESHPHNIQITKESPNYSF. Positions 471, 472, and 473 each coordinate K(+). Positions 475–488 are enriched in polar residues; it reads HNIQITKESPNYSF.

The protein belongs to the IMPDH/GMPR family. In terms of assembly, homotetramer. The cofactor is K(+).

The enzyme catalyses IMP + NAD(+) + H2O = XMP + NADH + H(+). The protein operates within purine metabolism; XMP biosynthesis via de novo pathway; XMP from IMP: step 1/1. Mycophenolic acid (MPA) is a non-competitive inhibitor that prevents formation of the closed enzyme conformation by binding to the same site as the amobile flap. In contrast, mizoribine monophosphate (MZP) is a competitive inhibitor that induces the closed conformation. MPA is a potent inhibitor of mammalian IMPDHs but a poor inhibitor of the bacterial enzymes. MZP is a more potent inhibitor of bacterial IMPDH. Catalyzes the conversion of inosine 5'-phosphate (IMP) to xanthosine 5'-phosphate (XMP), the first committed and rate-limiting step in the de novo synthesis of guanine nucleotides, and therefore plays an important role in the regulation of cell growth. The sequence is that of Inosine-5'-monophosphate dehydrogenase from Staphylococcus aureus (strain Mu50 / ATCC 700699).